Reading from the N-terminus, the 300-residue chain is NAD kinase (300 aa).

Residue Asp75 is the Proton acceptor of the active site. NAD(+) contacts are provided by residues 75–76, 149–150, Arg177, Asp179, 190–195, Ala214, and Gln248; these read DG, ND, and TAYALS.

It belongs to the NAD kinase family. A divalent metal cation serves as cofactor.

The protein resides in the cytoplasm. The enzyme catalyses NAD(+) + ATP = ADP + NADP(+) + H(+). Functionally, involved in the regulation of the intracellular balance of NAD and NADP, and is a key enzyme in the biosynthesis of NADP. Catalyzes specifically the phosphorylation on 2'-hydroxyl of the adenosine moiety of NAD to yield NADP. This is NAD kinase from Burkholderia mallei (strain SAVP1).